Consider the following 394-residue polypeptide: Protein BUR2 (394 aa).

2 disordered regions span residues M1 to Q32 and M372 to F394. A compositionally biased stretch (polar residues) spans I9 to Q32. Basic and acidic residues predominate over residues M372–S381.

Belongs to the BUR kinase complex.

It is found in the nucleus. In terms of biological role, component of the BUR kinase complex involved in transcription regulation. This complex phosphorylates the UBC2/RAD6 ubiquitin-conjugating enzyme (E2), leading to monoubiquitination of histone H2B and the silencing of telomeric-associated genes. Also required for histone H3 methylation. Necessary for the recovery from pheromone-induced growth arrest in the cell cycle G1 phase. The kinase activity of the complex requires the presence of BUR2. Overexpression of BUR2 interferes with mitotic chromosome segregation. The sequence is that of Protein BUR2 (BUR2) from Kluyveromyces lactis (strain ATCC 8585 / CBS 2359 / DSM 70799 / NBRC 1267 / NRRL Y-1140 / WM37) (Yeast).